A 147-amino-acid polypeptide reads, in one-letter code: Myosin-ID light chain (147 aa).

EF-hand domains are found at residues 8–43, 79–114, and 115–147; these read EAQS…LGQN, FDEK…LGER, and LPEE…MLKK. Ca(2+) contacts are provided by aspartate 21, asparagine 23, aspartate 25, lysine 27, and glutamate 32.

In terms of assembly, myosin I is a dimer of a heavy and a light chain. Inability to self-assemble into filaments. Interacts with myoD. Does not interact with myoB or myoC.

The protein resides in the cytoplasm. Its function is as follows. Functions as the light chain for myosin-D. Has low affinity for calcium. In Dictyostelium discoideum (Social amoeba), this protein is Myosin-ID light chain (mlcD).